The primary structure comprises 444 residues: Elongation factor 1-alpha (444 aa).

Positions 15-236 (KPHLNLAVIG…ALDTFQPPPR (222 aa)) constitute a tr-type G domain. The interval 24–31 (GHVDNGKS) is G1. 24–31 (GHVDNGKS) contacts GTP. Ser-31 is a binding site for Mg(2+). Residues 80–84 (GVTIE) are G2. Residues 101-104 (DLPG) form a G3 region. GTP contacts are provided by residues 101–105 (DLPGH) and 163–166 (NKMD). The tract at residues 163–166 (NKMD) is G4. The G5 stretch occupies residues 202–204 (SAI).

It belongs to the TRAFAC class translation factor GTPase superfamily. Classic translation factor GTPase family. EF-Tu/EF-1A subfamily.

It localises to the cytoplasm. It carries out the reaction GTP + H2O = GDP + phosphate + H(+). Functionally, GTP hydrolase that promotes the GTP-dependent binding of aminoacyl-tRNA to the A-site of ribosomes during protein biosynthesis. This is Elongation factor 1-alpha from Pyrobaculum islandicum (strain DSM 4184 / JCM 9189 / GEO3).